The sequence spans 326 residues: Transmembrane protein 255B (326 aa).

The next 4 membrane-spanning stretches (helical) occupy residues leucine 26–alanine 46, valine 55–isoleucine 75, leucine 85–valine 105, and alanine 200–phenylalanine 220. The interval leucine 284–proline 326 is disordered. Residues glutamine 305–proline 326 are compositionally biased toward pro residues.

Belongs to the TMEM255 family.

The protein resides in the membrane. The chain is Transmembrane protein 255B (TMEM255B) from Homo sapiens (Human).